A 234-amino-acid chain; its full sequence is Potassium/proton antiporter CemA (234 aa).

The next 4 helical transmembrane spans lie at 8 to 28 (IPLR…WIPL), 117 to 137 (TICF…LFIL), 157 to 177 (ILFV…ELLI), and 193 to 213 (IILS…FKYW).

It belongs to the CemA family.

The protein localises to the plastid. The protein resides in the chloroplast inner membrane. The catalysed reaction is K(+)(in) + H(+)(out) = K(+)(out) + H(+)(in). Its function is as follows. Contributes to K(+)/H(+) antiport activity by supporting proton efflux to control proton extrusion and homeostasis in chloroplasts in a light-dependent manner to modulate photosynthesis. Prevents excessive induction of non-photochemical quenching (NPQ) under continuous-light conditions. Indirectly promotes efficient inorganic carbon uptake into chloroplasts. The polypeptide is Potassium/proton antiporter CemA (Citrus sinensis (Sweet orange)).